We begin with the raw amino-acid sequence, 526 residues long: ATP synthase subunit alpha (526 aa).

An ATP-binding site is contributed by 171–178; the sequence is GDRQTGKT.

It belongs to the ATPase alpha/beta chains family. F-type ATPases have 2 components, CF(1) - the catalytic core - and CF(0) - the membrane proton channel. CF(1) has five subunits: alpha(3), beta(3), gamma(1), delta(1), epsilon(1). CF(0) has three main subunits: a(1), b(2) and c(9-12). The alpha and beta chains form an alternating ring which encloses part of the gamma chain. CF(1) is attached to CF(0) by a central stalk formed by the gamma and epsilon chains, while a peripheral stalk is formed by the delta and b chains.

The protein localises to the cell inner membrane. It carries out the reaction ATP + H2O + 4 H(+)(in) = ADP + phosphate + 5 H(+)(out). In terms of biological role, produces ATP from ADP in the presence of a proton gradient across the membrane. The alpha chain is a regulatory subunit. The polypeptide is ATP synthase subunit alpha (Cytophaga hutchinsonii (strain ATCC 33406 / DSM 1761 / CIP 103989 / NBRC 15051 / NCIMB 9469 / D465)).